The chain runs to 587 residues: Aspartate--tRNA ligase (587 aa).

Glu174 contributes to the L-aspartate binding site. Residues 198-201 (QITK) form an aspartate region. Arg220 contacts L-aspartate. Residues 220–222 (RDE) and Gln229 each bind ATP. His443 is a binding site for L-aspartate. Glu477 serves as a coordination point for ATP. Arg484 serves as a coordination point for L-aspartate. 529–532 (GLDR) lines the ATP pocket.

It belongs to the class-II aminoacyl-tRNA synthetase family. Type 1 subfamily. As to quaternary structure, homodimer.

The protein localises to the cytoplasm. The catalysed reaction is tRNA(Asp) + L-aspartate + ATP = L-aspartyl-tRNA(Asp) + AMP + diphosphate. Its function is as follows. Catalyzes the attachment of L-aspartate to tRNA(Asp) in a two-step reaction: L-aspartate is first activated by ATP to form Asp-AMP and then transferred to the acceptor end of tRNA(Asp). This Streptococcus pneumoniae (strain 70585) protein is Aspartate--tRNA ligase.